Here is a 57-residue protein sequence, read N- to C-terminus: COP9 signalosome complex subunit 9 (57 aa).

The protein belongs to the CSN9 family. In terms of assembly, component of the CSN complex, probably composed of cops1, cops2, cops3, cops4, cops5, cops6, cops7, cops8 and cops9.

It localises to the nucleus. The protein localises to the cytoplasm. The protein resides in the nucleoplasm. Component of the COP9 signalosome complex (CSN), a complex involved in various cellular and developmental processes. The CSN complex is an essential regulator of the ubiquitin (Ubl) conjugation pathway by mediating the deneddylation of the cullin subunits of SCF-type E3 ligase complexes, leading to decrease the Ubl ligase activity. May play a role in cell proliferation. In Xenopus tropicalis (Western clawed frog), this protein is COP9 signalosome complex subunit 9.